The following is a 317-amino-acid chain: Methionyl-tRNA formyltransferase (317 aa).

(6S)-5,6,7,8-tetrahydrofolate is bound at residue 112 to 115 (SLLP).

This sequence belongs to the Fmt family.

The catalysed reaction is L-methionyl-tRNA(fMet) + (6R)-10-formyltetrahydrofolate = N-formyl-L-methionyl-tRNA(fMet) + (6S)-5,6,7,8-tetrahydrofolate + H(+). Attaches a formyl group to the free amino group of methionyl-tRNA(fMet). The formyl group appears to play a dual role in the initiator identity of N-formylmethionyl-tRNA by promoting its recognition by IF2 and preventing the misappropriation of this tRNA by the elongation apparatus. The polypeptide is Methionyl-tRNA formyltransferase (Mycoplasma mycoides subsp. mycoides SC (strain CCUG 32753 / NCTC 10114 / PG1)).